A 137-amino-acid chain; its full sequence is BolA-like protein 1 (137 aa).

S81 carries the phosphoserine modification. Residues 114–137 are disordered; that stretch reads WGENSQLDTSPPCLGGNKKTLGTP.

The protein belongs to the BolA/IbaG family. Interacts with GLRX5.

The protein localises to the mitochondrion. In terms of biological role, acts as a mitochondrial iron-sulfur (Fe-S) cluster assembly factor that facilitates (Fe-S) cluster insertion into a subset of mitochondrial proteins. Probably acts together with the monothiol glutaredoxin GLRX5. May protect cells against oxidative stress. This Pongo abelii (Sumatran orangutan) protein is BolA-like protein 1 (BOLA1).